The sequence spans 96 residues: Large ribosomal subunit protein bL27 (96 aa).

Positions 1–9 (MLRLDLQFF) are excised as a propeptide. The disordered stretch occupies residues 14–36 (GVGSTKNGRDSQSKRLGAKRADG).

This sequence belongs to the bacterial ribosomal protein bL27 family. The N-terminus is cleaved by ribosomal processing cysteine protease Prp.

This Bacillus anthracis (strain A0248) protein is Large ribosomal subunit protein bL27.